Consider the following 633-residue polypeptide: 1-deoxy-D-xylulose-5-phosphate synthase (633 aa).

The segment covering 1-12 (MSEPTANLQPAS) has biased composition (polar residues). Residues 1–21 (MSEPTANLQPASRTPLLDRVN) are disordered. Thiamine diphosphate contacts are provided by residues His-86 and 127–129 (GHA). Mg(2+) is bound at residue Asp-158. Thiamine diphosphate contacts are provided by residues 159–160 (GS), Asn-187, and Glu-377. Position 187 (Asn-187) interacts with Mg(2+).

The protein belongs to the transketolase family. DXPS subfamily. As to quaternary structure, homodimer. Requires Mg(2+) as cofactor. Thiamine diphosphate is required as a cofactor.

The enzyme catalyses D-glyceraldehyde 3-phosphate + pyruvate + H(+) = 1-deoxy-D-xylulose 5-phosphate + CO2. Its pathway is metabolic intermediate biosynthesis; 1-deoxy-D-xylulose 5-phosphate biosynthesis; 1-deoxy-D-xylulose 5-phosphate from D-glyceraldehyde 3-phosphate and pyruvate: step 1/1. Catalyzes the acyloin condensation reaction between C atoms 2 and 3 of pyruvate and glyceraldehyde 3-phosphate to yield 1-deoxy-D-xylulose-5-phosphate (DXP). The polypeptide is 1-deoxy-D-xylulose-5-phosphate synthase (Deinococcus geothermalis (strain DSM 11300 / CIP 105573 / AG-3a)).